The sequence spans 433 residues: Serine--tRNA ligase (433 aa).

239-241 provides a ligand contact to L-serine; the sequence is TAE. Residue 270-272 coordinates ATP; the sequence is RSE. Residue Glu293 participates in L-serine binding. 357–360 serves as a coordination point for ATP; the sequence is EISS. L-serine is bound at residue Ser393.

This sequence belongs to the class-II aminoacyl-tRNA synthetase family. Type-1 seryl-tRNA synthetase subfamily. In terms of assembly, homodimer. The tRNA molecule binds across the dimer.

Its subcellular location is the cytoplasm. It carries out the reaction tRNA(Ser) + L-serine + ATP = L-seryl-tRNA(Ser) + AMP + diphosphate + H(+). It catalyses the reaction tRNA(Sec) + L-serine + ATP = L-seryl-tRNA(Sec) + AMP + diphosphate + H(+). It functions in the pathway aminoacyl-tRNA biosynthesis; selenocysteinyl-tRNA(Sec) biosynthesis; L-seryl-tRNA(Sec) from L-serine and tRNA(Sec): step 1/1. Catalyzes the attachment of serine to tRNA(Ser). Is also able to aminoacylate tRNA(Sec) with serine, to form the misacylated tRNA L-seryl-tRNA(Sec), which will be further converted into selenocysteinyl-tRNA(Sec). The sequence is that of Serine--tRNA ligase from Sorangium cellulosum (strain So ce56) (Polyangium cellulosum (strain So ce56)).